The sequence spans 184 residues: ATP synthase subunit b, chloroplastic (184 aa).

A helical membrane pass occupies residues 29–49; it reads INLINLILVLGILFYYGKGVL.

Belongs to the ATPase B chain family. As to quaternary structure, F-type ATPases have 2 components, F(1) - the catalytic core - and F(0) - the membrane proton channel. F(1) has five subunits: alpha(3), beta(3), gamma(1), delta(1), epsilon(1). F(0) has four main subunits: a(1), b(1), b'(1) and c(10-14). The alpha and beta chains form an alternating ring which encloses part of the gamma chain. F(1) is attached to F(0) by a central stalk formed by the gamma and epsilon chains, while a peripheral stalk is formed by the delta, b and b' chains.

It is found in the plastid. Its subcellular location is the chloroplast thylakoid membrane. In terms of biological role, f(1)F(0) ATP synthase produces ATP from ADP in the presence of a proton or sodium gradient. F-type ATPases consist of two structural domains, F(1) containing the extramembraneous catalytic core and F(0) containing the membrane proton channel, linked together by a central stalk and a peripheral stalk. During catalysis, ATP synthesis in the catalytic domain of F(1) is coupled via a rotary mechanism of the central stalk subunits to proton translocation. Component of the F(0) channel, it forms part of the peripheral stalk, linking F(1) to F(0). The sequence is that of ATP synthase subunit b, chloroplastic from Adiantum capillus-veneris (Maidenhair fern).